The primary structure comprises 166 residues: NAD(P)H-quinone oxidoreductase subunit I, chloroplastic (166 aa).

4Fe-4S ferredoxin-type domains lie at 55–84 and 95–124; these read GRIH…VDWK and LNYS…MTEE. Cysteine 64, cysteine 67, cysteine 70, cysteine 74, cysteine 104, cysteine 107, cysteine 110, and cysteine 114 together coordinate [4Fe-4S] cluster.

It belongs to the complex I 23 kDa subunit family. As to quaternary structure, NDH is composed of at least 16 different subunits, 5 of which are encoded in the nucleus. [4Fe-4S] cluster is required as a cofactor.

The protein localises to the plastid. The protein resides in the chloroplast thylakoid membrane. It carries out the reaction a plastoquinone + NADH + (n+1) H(+)(in) = a plastoquinol + NAD(+) + n H(+)(out). It catalyses the reaction a plastoquinone + NADPH + (n+1) H(+)(in) = a plastoquinol + NADP(+) + n H(+)(out). NDH shuttles electrons from NAD(P)H:plastoquinone, via FMN and iron-sulfur (Fe-S) centers, to quinones in the photosynthetic chain and possibly in a chloroplast respiratory chain. The immediate electron acceptor for the enzyme in this species is believed to be plastoquinone. Couples the redox reaction to proton translocation, and thus conserves the redox energy in a proton gradient. This chain is NAD(P)H-quinone oxidoreductase subunit I, chloroplastic, found in Pentanema britannica (British yellowhead).